The primary structure comprises 316 residues: tRNA dimethylallyltransferase (316 aa).

17–24 (GPTASGKT) is a binding site for ATP. Residue 19-24 (TASGKT) coordinates substrate. Interaction with substrate tRNA stretches follow at residues 42–45 (DSAL), 166–170 (QRLSR), 247–252 (RCVGYR), and 280–287 (KRQITWLR).

Belongs to the IPP transferase family. As to quaternary structure, monomer. Requires Mg(2+) as cofactor.

It catalyses the reaction adenosine(37) in tRNA + dimethylallyl diphosphate = N(6)-dimethylallyladenosine(37) in tRNA + diphosphate. Its function is as follows. Catalyzes the transfer of a dimethylallyl group onto the adenine at position 37 in tRNAs that read codons beginning with uridine, leading to the formation of N6-(dimethylallyl)adenosine (i(6)A). The sequence is that of tRNA dimethylallyltransferase from Escherichia coli O6:K15:H31 (strain 536 / UPEC).